The primary structure comprises 198 residues: Virion infectivity factor (198 aa).

The tract at residues 76 to 115 (GERPWHLGHGIGLEWRQGKYSTQIDPETADQLIHTRYFTC) is RNA-binding. A Phosphothreonine; by host MAP4K1 modification is found at Thr97. The HCCH motif motif lies at 109–140 (HTRYFTCFAAGAVRQAILGERILTFCHFQSGH). A Phosphothreonine; by host modification is found at Thr145. The short motif at 145–154 (TLQFLAFRKV) is the BC-box-like motif element. Residues 152-170 (RKVVESQDKQPKGPRRPLP) form a multimerization region. Positions 159–198 (DKQPKGPRRPLPSVTKLTEDRWNKHRTTTGRRENHTLSGC) are disordered. Ser171 is subject to Phosphoserine; by host MAP4K1. The membrane association stretch occupies residues 177-178 (ED). The span at 188 to 198 (GRRENHTLSGC) shows a compositional bias: basic and acidic residues.

The protein belongs to the primate lentivirus group Vif protein family. Homomultimer; in vitro and presumably in vivo. Interacts with viral Pr55Gag precursor, host APOBEC3G, UBCE7IP1 isoform 3/ZIN, ABCE1 and possibly with SAT. Forms an E3 ligase complex by interacting with host CUL5 and elongin BC complex (ELOB and ELOC). Highly phosphorylated on serine and threonine residues. Thr-97 and Ser-171 are phosphorylated by the mitogen activated kinase MAP4K1. Post-translationally, polyubiquitinated and degraded by the proteasome in the presence of APOBEC3G.

It is found in the host cytoplasm. The protein localises to the host cell membrane. It localises to the virion. Counteracts the innate antiviral activity of APOBEC3G. Forms a complex with host APOBEC3G thus preventing the entry of this lethally hypermutating enzyme into progeny virions. Functions as an adapter molecule, recruiting APOBEC3G to the ubiquitin-proteasome machinery. Targets APOBEC3G for degradation through the assembly with elongin BC complex, CUL5 and RBX1. Binds viral RNA and affects the stability of viral nucleoprotein core. May play a role in viral morphology. Interacts with host ABCE1, which seems to be involved in lentiviruses capsid formation and displays RNase L inhibitor activity. This interaction may play a role in protecting viral RNA from damage during viral assembly. May interact with host SAT, which is a regulator of polyamine cell level. This interaction may be relevant since polyamines affect viral RNA properties. The sequence is that of Virion infectivity factor from Pan troglodytes (Chimpanzee).